A 461-amino-acid chain; its full sequence is Aldehyde dehydrogenase LUC3 (461 aa).

Glycine 215 to glycine 220 contacts NAD(+). Active-site residues include glutamate 237 and cysteine 271.

Belongs to the aldehyde dehydrogenase family.

The enzyme catalyses an aldehyde + NAD(+) + H2O = a carboxylate + NADH + 2 H(+). The protein operates within mycotoxin biosynthesis. In terms of biological role, aldehyde dehydrogenase; part of the gene cluster that mediates the biosynthesis of the mycotoxin lucilactaene and the lucilactaene-related compound NG-391 that act as cell cycle inhibitors with potent growth inhibitory activity against malarial parasites, moderate growth inhibitory activity against cancer cells, and no activity against bacteria and fungi. LUC3 is important for lucilactaene biosynthesis and performs the oxidation of the C-20 alcoholic analog prelucilactaene G into a carboxylic derivative that has still to be identified. The pathway begins with the hybrid PKS-NRPS synthetase LUC5 which is responsible for the condensation of one acetyl-coenzyme A (CoA) unit with six malonyl-CoA units and the amide linkage of the arising heptaketide and homoserine, subsequently releasing the first intermediate prelucilactaene B. Both the cytochrome P450 monooxygenase LUC2 and the hydrolase LUC6 function in parallel in modification of prelucilactaene B. LUC6 may catalyze the 2-pyrrolidone ring formation to form prelucilactaene C from prelucilactaene B, followed by C-15 hydroxylation by the same enzyme to give prelucilactaene D, which is then converted to prelucilactaene E by epoxidation, and finally to prelucilactaene F by cyclization. Prelucilactane D, prelucilactaene E, and prelucilactaene F can be converted to dihydrolucilactaene, NG391, and lucilactaene, respectively, via C-20 methyl group hydroxylation by the cytochrome P450 monooxygenase LUC2. However, LUC2, unlike FUS8 in fusarin C biosynthesis, is not enough for the full oxidation of the C-20 methyl group into carboxylic acid, which is a prerequisite for the final methylation step. The aldehyde dehydrogenase LUC3 is involved in the biosynthesis by further oxidation of the C-20 alcoholic analog prelucilactaene G into a carboxylic derivative. This unidentified carboxylic derivative may be converted to demethyllucilactaene. As the last step, the methyltransferase LUC1 methylates the hydroxyl group at C-21 of demethyllucilactaene to generate lucilactaene. The polypeptide is Aldehyde dehydrogenase LUC3 (Fusarium sp).